The sequence spans 654 residues: Acetyl-coenzyme A synthetase (654 aa).

CoA-binding positions include 196-199 (RGGK) and Thr316. Residues 392–394 (GEP), 416–421 (DTWWQT), Asp506, and Arg521 each bind ATP. Ser529 is a CoA binding site. Residue Arg532 participates in ATP binding. Positions 543 and 548 each coordinate Mg(2+). Lys618 bears the N6-acetyllysine mark.

The protein belongs to the ATP-dependent AMP-binding enzyme family. Requires Mg(2+) as cofactor. Post-translationally, acetylated. Deacetylation by the SIR2-homolog deacetylase activates the enzyme.

The enzyme catalyses acetate + ATP + CoA = acetyl-CoA + AMP + diphosphate. In terms of biological role, catalyzes the conversion of acetate into acetyl-CoA (AcCoA), an essential intermediate at the junction of anabolic and catabolic pathways. AcsA undergoes a two-step reaction. In the first half reaction, AcsA combines acetate with ATP to form acetyl-adenylate (AcAMP) intermediate. In the second half reaction, it can then transfer the acetyl group from AcAMP to the sulfhydryl group of CoA, forming the product AcCoA. The protein is Acetyl-coenzyme A synthetase of Methylobacillus flagellatus (strain ATCC 51484 / DSM 6875 / VKM B-1610 / KT).